Reading from the N-terminus, the 120-residue chain is Glycophorin-A (120 aa).

Q1 is subject to Pyrrolidone carboxylic acid. The disordered stretch occupies residues 1–40 (QTIATGSPPIAGTSDLSTITSAATPTFTTEQDGREQGDGL). Residues T2 and T5 are each glycosylated (O-linked (GalNAc...) threonine). The O-linked (GalNAc...) serine glycan is linked to S7. An O-linked (GalNAc...) threonine glycan is attached at T13. Residue S17 is glycosylated (O-linked (GalNAc...) serine). Low complexity predominate over residues 17–29 (STITSAATPTFTT). O-linked (GalNAc...) threonine glycans are attached at residues T18 and T20. S21 carries an O-linked (GalNAc...) serine glycan. O-linked (GalNAc...) threonine glycans are attached at residues T24 and T28. Residues 50 to 72 (VITVIILGVMAGIIGIILLLAYV) form a helical membrane-spanning segment. Residues 78-120 (KRPPADVPPPASTVPSADAPPPVSEDDETSLTSVETDYPGDSQ) are disordered. Over residues 82 to 100 (ADVPPPASTVPSADAPPPV) the composition is skewed to pro residues. The segment covering 107-120 (SLTSVETDYPGDSQ) has biased composition (polar residues). S119 carries the post-translational modification Phosphoserine.

This sequence belongs to the glycophorin-A family. As to quaternary structure, homodimer.

It is found in the membrane. Functionally, glycophorin A is the major intrinsic membrane sialoglycoprotein of the erythrocyte. Appears to be important for the function of SLC4A1 and is required for high activity of SLC4A1. May be involved in translocation of SLC4A1 to the plasma membrane. The protein is Glycophorin-A of Equus caballus (Horse).